The sequence spans 414 residues: Sex comb on midleg-like protein 4 (414 aa).

Ser55 and Ser65 each carry phosphoserine. Polar residues predominate over residues 257–276; that stretch reads HRGSLHPSSSLYCKRQNSGD. Residues 257-343 are disordered; the sequence is HRGSLHPSSS…DARRPRSRNP (87 aa). A compositionally biased stretch (low complexity) spans 284 to 304; that stretch reads AATAGGPRTSPMSSGGPSAPG. The SAM domain maps to 288–354; that stretch reads GGPRTSPMSS…AWTVEDVVWF (67 aa). The segment covering 312–332 has biased composition (polar residues); the sequence is PKRNTTSLEGNRCASSPSQDA.

The protein belongs to the SCM family.

The protein localises to the nucleus. Its function is as follows. Putative Polycomb group (PcG) protein. PcG proteins act by forming multiprotein complexes, which are required to maintain the transcriptionally repressive state of homeotic genes throughout development. The sequence is that of Sex comb on midleg-like protein 4 (SCML4) from Homo sapiens (Human).